The following is a 69-amino-acid chain: Putative membrane protein insertion efficiency factor (69 aa).

This sequence belongs to the UPF0161 family.

The protein localises to the cell inner membrane. In terms of biological role, could be involved in insertion of integral membrane proteins into the membrane. The chain is Putative membrane protein insertion efficiency factor from Aromatoleum aromaticum (strain DSM 19018 / LMG 30748 / EbN1) (Azoarcus sp. (strain EbN1)).